A 240-amino-acid chain; its full sequence is Splicing factor U2AF 35 kDa subunit (240 aa).

Ala-2 is modified (N-acetylalanine). The C3H1-type 1 zinc finger occupies 12–40 (EKDKVNCSFYFKIGACRHGDRCSRLHNKP). N6-methyllysine is present on Lys-39. Ser-61 and Ser-145 each carry phosphoserine. The region spanning 65 to 147 (LRCAVSDVEM…QPIHAELSPV (83 aa)) is the RRM domain. A C3H1-type 2 zinc finger spans residues 149–176 (DFREACCRQYEMGECTRGGFCNFMHLKP). An Omega-N-methylarginine modification is found at Arg-165. The tract at residues 183-240 (RELYGRRRKKHRSRSRSRERRSRSRDRGRGGGGGGGGGGGGRERDRRRSRDRERSGRF) is disordered. Basic residues predominate over residues 188–208 (RRRKKHRSRSRSRERRSRSRD). Gly residues predominate over residues 212–222 (GGGGGGGGGGG). Residues 223-240 (GRERDRRRSRDRERSGRF) are compositionally biased toward basic and acidic residues.

Belongs to the splicing factor SR family. Identified in the spliceosome C complex. Heterodimer with U2AF2. Interacts (via RS domain) with PHF5A (via N-terminus). Interacts with ZRANB2. Interacts with SDE2. Interacts with SF3B1.

The protein localises to the nucleus. It localises to the nucleus speckle. Plays a critical role in both constitutive and enhancer-dependent splicing by mediating protein-protein interactions and protein-RNA interactions required for accurate 3'-splice site selection. Recruits U2 snRNP to the branch point. Directly mediates interactions between U2AF2 and proteins bound to the enhancers and thus may function as a bridge between U2AF2 and the enhancer complex to recruit it to the adjacent intron. This chain is Splicing factor U2AF 35 kDa subunit (U2AF1), found in Homo sapiens (Human).